The sequence spans 145 residues: Bacilliredoxin SH1401 (145 aa).

The protein belongs to the bacilliredoxin family.

The sequence is that of Bacilliredoxin SH1401 from Staphylococcus haemolyticus (strain JCSC1435).